The following is a 278-amino-acid chain: HTH-type transcriptional activator RhaS (278 aa).

The HTH araC/xylS-type domain occupies 174–272 (NLLLAWLEDH…NWSPRDIRQG (99 aa)). 2 DNA-binding regions (H-T-H motif) span residues 191–212 (DAVA…KQQT) and 239–262 (VTDI…RREF).

In terms of assembly, binds DNA as a dimer.

The protein localises to the cytoplasm. Its function is as follows. Activates expression of the rhaBAD and rhaT operons. The polypeptide is HTH-type transcriptional activator RhaS (Shigella boydii serotype 4 (strain Sb227)).